Here is a 523-residue protein sequence, read N- to C-terminus: 2-isopropylmalate synthase (523 aa).

The region spanning 5–267 (VIIFDTTLRD…HTNINHHEIW (263 aa)) is the Pyruvate carboxyltransferase domain. Mn(2+)-binding residues include Asp14, His202, His204, and Asn238. The regulatory domain stretch occupies residues 392–523 (RLDYFSVQSG…QNKENNKETV (132 aa)).

Belongs to the alpha-IPM synthase/homocitrate synthase family. LeuA type 1 subfamily. Homodimer. Requires Mn(2+) as cofactor.

Its subcellular location is the cytoplasm. The enzyme catalyses 3-methyl-2-oxobutanoate + acetyl-CoA + H2O = (2S)-2-isopropylmalate + CoA + H(+). The protein operates within amino-acid biosynthesis; L-leucine biosynthesis; L-leucine from 3-methyl-2-oxobutanoate: step 1/4. Functionally, catalyzes the condensation of the acetyl group of acetyl-CoA with 3-methyl-2-oxobutanoate (2-ketoisovalerate) to form 3-carboxy-3-hydroxy-4-methylpentanoate (2-isopropylmalate). In Salmonella paratyphi A (strain ATCC 9150 / SARB42), this protein is 2-isopropylmalate synthase.